The following is an 859-amino-acid chain: Photoactivated adenylate cyclase subunit beta (859 aa).

In terms of domain architecture, BLUF 1 spans 56-149; that stretch reads LRRLMYLSKS…GRMYGDWHMK (94 aa). The Guanylate cyclase 1 domain occupies 205–333; it reads VVTFIYLVEF…DCINTTSRIA (129 aa). Positions 420–443 are disordered; sequence RPPIFDDTPKGNPRPRTPGYGGRQ. Residues 471–563 form the BLUF 2 domain; the sequence is LTTLTYISQA…RVYPSEWTLT (93 aa). The 130-residue stretch at 619–748 folds into the Guanylate cyclase 2 domain; the sequence is VMLATDICSF…AVSARVMEVE (130 aa). Positions 813-859 are disordered; that stretch reads AARSGEKPLTEPEEAKPDFRVSPGRVRHGDSGRRSNSAQGKRSIQVR. A compositionally biased stretch (basic and acidic residues) spans 815–831; the sequence is RSGEKPLTEPEEAKPDF. A compositionally biased stretch (polar residues) spans 846 to 859; sequence RSNSAQGKRSIQVR.

This sequence belongs to the adenylyl cyclase class-4/guanylyl cyclase family. In terms of assembly, heterotetramer of two alpha and two beta subunits. FAD is required as a cofactor.

The protein localises to the cell projection. The protein resides in the cilium. Its subcellular location is the flagellum. It catalyses the reaction ATP = 3',5'-cyclic AMP + diphosphate. With respect to regulation, activity increased by up to 80-fold under blue light. Its function is as follows. Acts as a blue light photoreceptor for the step-up photophobic response. Mediates photoavoidance. This is Photoactivated adenylate cyclase subunit beta from Euglena gracilis.